The chain runs to 589 residues: uncharacterized protein (589 aa).

Residues 242–314 (TALEVRNIPE…RFIKIFWYNP (73 aa)) form the RRM domain. Disordered regions lie at residues 322 to 348 (PKKF…VDPA), 443 to 465 (ESPA…RGTN), and 566 to 589 (TSME…GRWR). Phosphoserine is present on S330. The span at 330–340 (SPTTSDSSNVE) shows a compositional bias: low complexity. T332 is modified (phosphothreonine). At S334 the chain carries Phosphoserine. Residues 566 to 579 (TSMETGESNTSDNM) are compositionally biased toward polar residues.

It localises to the nucleus. This is an uncharacterized protein from Schizosaccharomyces pombe (strain 972 / ATCC 24843) (Fission yeast).